Reading from the N-terminus, the 142-residue chain is Transcriptional regulator MraZ (142 aa).

SpoVT-AbrB domains follow at residues 5-51 (ASAL…PRPE) and 77-120 (AADV…DAAT).

This sequence belongs to the MraZ family. In terms of assembly, forms oligomers.

Its subcellular location is the cytoplasm. It localises to the nucleoid. The chain is Transcriptional regulator MraZ from Ralstonia pickettii (strain 12J).